The following is a 147-amino-acid chain: uncharacterized protein (147 aa).

This is an uncharacterized protein from Human cytomegalovirus (strain AD169) (HHV-5).